The primary structure comprises 372 residues: GTP cyclohydrolase 1 type 2 homolog (372 aa).

A divalent metal cation contacts are provided by His-67, His-68, Asp-106, His-332, and Glu-335.

Belongs to the GTP cyclohydrolase I type 2/NIF3 family. In terms of assembly, homohexamer.

The sequence is that of GTP cyclohydrolase 1 type 2 homolog from Halalkalibacterium halodurans (strain ATCC BAA-125 / DSM 18197 / FERM 7344 / JCM 9153 / C-125) (Bacillus halodurans).